Here is a 458-residue protein sequence, read N- to C-terminus: MESAPDAEEARTVREALGRYEAALEGAVRALHEDMQGLQRGVEQRVAEALRLAGPLARTVAELQRDNQRLQTQLERLTRQVESLGLTTGLAPAPGTPSPPPAPGVPNRAPRLGTARFASHATFSLSGRSQSLDHHDEASELEMRRTSNSCIIENGHQPGADPGDGPPEATQTIPAPEPPKPRPVSLSLRLPHQPVTAVTRVSERFSGETSATALSPTSAAILGGLSSSPSEATTPWTPSPSEKNSSLPRSLSSSGFGAMTASRNNNSPPLVTPPQSPPSPQPPATTQAHRPGERRRELVRSQTLPRTSGAQARKALFEKWEQDTAGKGKGETRAKLKRSQSFGVASASSIKQILLEWCRSKTLGYQHVDLQNFSSSWSDGMAFCALVHSFFPDAFDYNALSPTQRRQNFELAFTMAENLANCERLIEVEDMMVMGRKPDPMCVFTYVQSLYNHLRRFE.

Positions 24 to 88 form a coiled coil; sequence LEGAVRALHE…RQVESLGLTT (65 aa). Disordered stretches follow at residues 87-111, 123-142, and 151-312; these read TTGLAPAPGTPSPPPAPGVPNRAPR, FSLSGRSQSLDHHDEASELE, and IIEN…GAQA. Residues 94 to 104 are compositionally biased toward pro residues; sequence PGTPSPPPAPG. Phosphothreonine is present on Thr96. 3 positions are modified to phosphoserine: Ser98, Ser126, and Ser131. Residues 131–142 show a composition bias toward basic and acidic residues; it reads SLDHHDEASELE. 2 stretches are compositionally biased toward low complexity: residues 158–167 and 209–220; these read PGADPGDGPP and TSATALSPTSAA. A compositionally biased stretch (polar residues) spans 225 to 244; sequence LSSSPSEATTPWTPSPSEKN. Residues 245–254 are compositionally biased toward low complexity; it reads SSLPRSLSSS. Phosphoserine is present on residues Ser252, Ser254, and Ser267. Over residues 270–283 the composition is skewed to pro residues; the sequence is LVTPPQSPPSPQPP. The residue at position 272 (Thr272) is a Phosphothreonine. Ser276 carries the post-translational modification Phosphoserine. A compositionally biased stretch (basic and acidic residues) spans 290 to 299; the sequence is RPGERRRELV. Polar residues predominate over residues 300–310; that stretch reads RSQTLPRTSGA. The residue at position 341 (Ser341) is a Phosphoserine. A Calponin-homology (CH) domain is found at 348 to 455; that stretch reads SSIKQILLEW…YVQSLYNHLR (108 aa).

It belongs to the smoothelin family.

In Bos taurus (Bovine), this protein is Smoothelin-like protein 2 (SMTNL2).